The following is a 243-amino-acid chain: MAELDPFGVPAGGPALGNGVAGEEDPAAAFLAQQESEIAGIENDEAFAILDGGAPGSQPHGEPPGIPDAVDGVTNGDYYQESNGPTDSYAAISQVDRLQSEPESIRKWREEQTERLEALDANSRKQEAEWKEKAIKELDEWYARQDEQLQKTKANNRVADEAFYKQPFADVIGYVTNINHPCYSLEQAAEEAFVNDIEESSPGTEWERVARLCDFNPKSSKQAKDVSRMRSVLISLKQAPLVH.

A Blocked amino end (Met) modification is found at methionine 1. 2 disordered regions span residues 1–22 (MAEL…GVAG) and 49–87 (ILDG…GPTD). A compositionally biased stretch (gly residues) spans 10–20 (PAGGPALGNGV). Positions 95–157 (VDRLQSEPES…QLQKTKANNR (63 aa)) are involved in binding clathrin heavy chain. A phosphoserine mark is found at serine 100 and serine 201. N6-acetyllysine is present on lysine 218. Serine 231 is modified (phosphoserine). Lysine 237 carries the N6-acetyllysine modification.

This sequence belongs to the clathrin light chain family. As to quaternary structure, clathrin coats are formed from molecules containing 3 heavy chains and 3 light chains. Interacts with CALY; the interaction stimulates clathrin self-assembly and clathrin-mediated endocytosis. Interacts with CKAP5 and TACC3 forming the TACC3/ch-TOG/clathrin complex located at spindle inter-microtubules bridges; the complex implicates clathrin triskelions.

It localises to the cytoplasmic vesicle membrane. It is found in the membrane. The protein resides in the coated pit. Its subcellular location is the cytoplasm. The protein localises to the cytoskeleton. It localises to the spindle. In terms of biological role, clathrin is the major protein of the polyhedral coat of coated pits and vesicles. Acts as a component of the TACC3/ch-TOG/clathrin complex proposed to contribute to stabilization of kinetochore fibers of the mitotic spindle by acting as inter-microtubule bridge. The sequence is that of Clathrin light chain A (CLTA) from Bos taurus (Bovine).